The following is a 302-amino-acid chain: Short-chain dehydrogenase/reductase 3 (302 aa).

The next 4 helical transmembrane spans lie at 9–29, 170–190, 195–215, and 253–273; these read LVVF…GLVL, IVCL…DYCT, AFAF…VSAT, and AVQL…LIIL. S175 contributes to the substrate binding site. Y188 acts as the Proton acceptor in catalysis.

Belongs to the short-chain dehydrogenases/reductases (SDR) family. As to expression, in the retina, expressed in cone but not rod outer segments.

It localises to the membrane. It catalyses the reaction all-trans-retinol + NADP(+) = all-trans-retinal + NADPH + H(+). Functionally, catalyzes the reduction of all-trans-retinal to all-trans-retinol in the presence of NADPH. This chain is Short-chain dehydrogenase/reductase 3 (DHRS3), found in Bos taurus (Bovine).